A 351-amino-acid polypeptide reads, in one-letter code: 3-hydroxy-4-methyl-anthranilyl-[aryl-carrier protein] 5-monooxygenase (351 aa).

Belongs to the aromatic-ring hydroxylase family. It depends on FAD as a cofactor.

The catalysed reaction is 3-hydroxy-4-methylanthranilyl-[aryl-carrier protein] + NADH + O2 + H(+) = 3,5-dihydroxy-4-methylanthranilyl-[aryl-carrier protein] + NAD(+) + H2O. The protein operates within antibiotic biosynthesis. In terms of biological role, involved in the biosynthesis of the antitumor antibiotic sibiromycin. Hydroxylates the C5 position of the peptidyl carrier protein (PCP)-bound 4-methyl-3-hydroxyanthranilic acid (4-MHA or 3H4MAA), leading to the formation of the fully substituted anthranilate moiety found in sibiromycin. In Streptosporangium sibiricum, this protein is 3-hydroxy-4-methyl-anthranilyl-[aryl-carrier protein] 5-monooxygenase.